A 445-amino-acid polypeptide reads, in one-letter code: UDP-N-acetylmuramoylalanine--D-glutamate ligase (445 aa).

117–123 (GSNGKTT) lines the ATP pocket.

This sequence belongs to the MurCDEF family.

Its subcellular location is the cytoplasm. It catalyses the reaction UDP-N-acetyl-alpha-D-muramoyl-L-alanine + D-glutamate + ATP = UDP-N-acetyl-alpha-D-muramoyl-L-alanyl-D-glutamate + ADP + phosphate + H(+). Its pathway is cell wall biogenesis; peptidoglycan biosynthesis. Functionally, cell wall formation. Catalyzes the addition of glutamate to the nucleotide precursor UDP-N-acetylmuramoyl-L-alanine (UMA). The sequence is that of UDP-N-acetylmuramoylalanine--D-glutamate ligase from Neisseria meningitidis serogroup A / serotype 4A (strain DSM 15465 / Z2491).